Reading from the N-terminus, the 879-residue chain is Alanine--tRNA ligase (879 aa).

Zn(2+)-binding residues include H566, H570, C668, and H672.

The protein belongs to the class-II aminoacyl-tRNA synthetase family. It depends on Zn(2+) as a cofactor.

The protein resides in the cytoplasm. It catalyses the reaction tRNA(Ala) + L-alanine + ATP = L-alanyl-tRNA(Ala) + AMP + diphosphate. Catalyzes the attachment of alanine to tRNA(Ala) in a two-step reaction: alanine is first activated by ATP to form Ala-AMP and then transferred to the acceptor end of tRNA(Ala). Also edits incorrectly charged Ser-tRNA(Ala) and Gly-tRNA(Ala) via its editing domain. This chain is Alanine--tRNA ligase, found in Clostridium botulinum (strain Hall / ATCC 3502 / NCTC 13319 / Type A).